We begin with the raw amino-acid sequence, 1142 residues long: Auxin response factor 5 (1142 aa).

The segment at residues 148-250 (FCKTLTASDT…QLLLGIRRAN (103 aa)) is a DNA-binding region (TF-B3). One can recognise a PB1 domain in the interval 1009-1093 (RTFTKVYKRG…RCIRILSPQE (85 aa)). Positions 1114 to 1142 (SSSDGVNGWRPRCDQNPGNPSIGPYDQFE) are disordered.

This sequence belongs to the ARF family. As to quaternary structure, homodimers and heterodimers. In terms of tissue distribution, expressed in roots, culms, leaves and young panicles.

The protein localises to the nucleus. In terms of biological role, auxin response factors (ARFs) are transcriptional factors that bind specifically to the DNA sequence 5'-TGTCTC-3' found in the auxin-responsive promoter elements (AuxREs). This chain is Auxin response factor 5 (ARF5), found in Oryza sativa subsp. japonica (Rice).